The chain runs to 382 residues: Secreted RxLR effector protein 118 (382 aa).

The signal sequence occupies residues Met1–Ala21. The RxLR-dEER signature appears at Arg48–Arg65. The interval Met308 to Asn382 is disordered. Residues Lys310 to Arg323 are compositionally biased toward polar residues.

It belongs to the RxLR effector family.

It is found in the secreted. It localises to the host nucleus. Its function is as follows. Secreted effector that completely suppresses the host cell death induced by cell death-inducing proteins. In Plasmopara viticola (Downy mildew of grapevine), this protein is Secreted RxLR effector protein 118.